The primary structure comprises 133 residues: ATP synthase epsilon chain (133 aa).

This sequence belongs to the ATPase epsilon chain family. F-type ATPases have 2 components, CF(1) - the catalytic core - and CF(0) - the membrane proton channel. CF(1) has five subunits: alpha(3), beta(3), gamma(1), delta(1), epsilon(1). CF(0) has three main subunits: a, b and c.

It is found in the cell membrane. Functionally, produces ATP from ADP in the presence of a proton gradient across the membrane. The chain is ATP synthase epsilon chain from Bacillus cereus (strain ATCC 14579 / DSM 31 / CCUG 7414 / JCM 2152 / NBRC 15305 / NCIMB 9373 / NCTC 2599 / NRRL B-3711).